Consider the following 516-residue polypeptide: 2,3-bisphosphoglycerate-independent phosphoglycerate mutase (516 aa).

Mn(2+) is bound by residues Asp-15 and Ser-65. Ser-65 serves as the catalytic Phosphoserine intermediate. Residues His-126, 156-157, Arg-188, Arg-194, 263-266, and Lys-336 each bind substrate; these read RD and RADR. Positions 403, 407, 444, 445, and 463 each coordinate Mn(2+).

It belongs to the BPG-independent phosphoglycerate mutase family. In terms of assembly, monomer. It depends on Mn(2+) as a cofactor.

It carries out the reaction (2R)-2-phosphoglycerate = (2R)-3-phosphoglycerate. Its pathway is carbohydrate degradation; glycolysis; pyruvate from D-glyceraldehyde 3-phosphate: step 3/5. Catalyzes the interconversion of 2-phosphoglycerate and 3-phosphoglycerate. This Francisella tularensis subsp. holarctica (strain OSU18) protein is 2,3-bisphosphoglycerate-independent phosphoglycerate mutase.